We begin with the raw amino-acid sequence, 245 residues long: Eukaryotic translation initiation factor 6 (245 aa).

The residue at position 113 (Tyr-113) is a Phosphotyrosine. Thr-165 carries the post-translational modification Phosphothreonine. Ser-166 bears the Phosphoserine mark. Phosphoserine; by CK1 occurs at positions 174 and 175. Phosphoserine; by PKC is present on Ser-235. A phosphoserine mark is found at Ser-239 and Ser-243.

It belongs to the eIF-6 family. As to quaternary structure, monomer. Associates with the 60S ribosomal subunit. Interacts with RACK1. Interacts with DICER1, AGO2, TARBP2, MOV10 and RPL7A; they form a large RNA-induced silencing complex (RISC). Phosphorylation at Ser-174 and Ser-175 by CSNK1D/CK1 promotes nuclear export. Post-translationally, ufmylated by UFL1. Detected in bladder, duodenum, liver, esophagus, pancreas, adipose tissue, megakaryocytes and testis with lower levels in muscle (at protein level).

The protein resides in the cytoplasm. The protein localises to the nucleus. Its subcellular location is the nucleolus. Its function is as follows. Binds to the 60S ribosomal subunit and prevents its association with the 40S ribosomal subunit to form the 80S initiation complex in the cytoplasm. Behaves as a stimulatory translation initiation factor downstream insulin/growth factors. Is also involved in ribosome biogenesis. Associates with pre-60S subunits in the nucleus and is involved in its nuclear export. Cytoplasmic release of TIF6 from 60S subunits and nuclear relocalization is promoted by a RACK1 (RACK1)-dependent protein kinase C activity. In tissues responsive to insulin, controls fatty acid synthesis and glycolysis by exerting translational control of adipogenic transcription factors such as CEBPB, CEBPD and ATF4 that have G/C rich or uORF in their 5'UTR. Required for ROS-dependent megakaryocyte maturation and platelets formation, controls the expression of mitochondrial respiratory chain genes involved in reactive oxygen species (ROS) synthesis. Involved in miRNA-mediated gene silencing by the RNA-induced silencing complex (RISC). Required for both miRNA-mediated translational repression and miRNA-mediated cleavage of complementary mRNAs by RISC. Modulates cell cycle progression and global translation of pre-B cells, its activation seems to be rate-limiting in tumorigenesis and tumor growth. In Mus musculus (Mouse), this protein is Eukaryotic translation initiation factor 6 (Eif6).